Here is a 312-residue protein sequence, read N- to C-terminus: tRNA-cytidine(32) 2-sulfurtransferase (312 aa).

The PP-loop motif signature appears at 48 to 53 (SGGKDS). Residues C123, C126, and C214 each coordinate [4Fe-4S] cluster.

It belongs to the TtcA family. Homodimer. Requires Mg(2+) as cofactor. The cofactor is [4Fe-4S] cluster.

The protein localises to the cytoplasm. It catalyses the reaction cytidine(32) in tRNA + S-sulfanyl-L-cysteinyl-[cysteine desulfurase] + AH2 + ATP = 2-thiocytidine(32) in tRNA + L-cysteinyl-[cysteine desulfurase] + A + AMP + diphosphate + H(+). Its pathway is tRNA modification. Catalyzes the ATP-dependent 2-thiolation of cytidine in position 32 of tRNA, to form 2-thiocytidine (s(2)C32). The sulfur atoms are provided by the cysteine/cysteine desulfurase (IscS) system. In Mannheimia succiniciproducens (strain KCTC 0769BP / MBEL55E), this protein is tRNA-cytidine(32) 2-sulfurtransferase.